The chain runs to 123 residues: Venom protein 29 (123 aa).

An N-terminal signal peptide occupies residues 1–18 (MNKLFLFTLLVTLWSVKG).

In terms of processing, contains 3 disulfide bonds. Expressed by the venom gland.

It is found in the secreted. In Lychas mucronatus (Chinese swimming scorpion), this protein is Venom protein 29.